Here is a 507-residue protein sequence, read N- to C-terminus: Probable Xaa-Pro aminopeptidase HCBG_01484 (507 aa).

4 residues coordinate Mn(2+): D283, D294, E431, and E469.

The protein belongs to the peptidase M24B family. Mn(2+) is required as a cofactor.

It catalyses the reaction Release of any N-terminal amino acid, including proline, that is linked to proline, even from a dipeptide or tripeptide.. Functionally, catalyzes the removal of a penultimate prolyl residue from the N-termini of peptides. This Ajellomyces capsulatus (strain G186AR / H82 / ATCC MYA-2454 / RMSCC 2432) (Darling's disease fungus) protein is Probable Xaa-Pro aminopeptidase HCBG_01484.